Consider the following 198-residue polypeptide: MIKLIVGLGNPGAEYEATRHNAGFWLVDQLARMGGATMRVEGRFHGLAARARLWDQDIWLLKPSTFMNRSGLAVVSLARFYKVLPDEIVVAHDEMDLPAGAAKLKRGGGAGGHNGLKDISAHLSTQDYWRLRLGVGHPRNAPGGAGAGREDVVNFVLKPPRREEQEAIDAAIDRCIEPLGLLARGDAERAMAQLHTTR.

A tRNA-binding site is contributed by tyrosine 15. The Proton acceptor role is filled by histidine 20. TRNA is bound by residues phenylalanine 66, asparagine 68, and asparagine 114.

This sequence belongs to the PTH family. Monomer.

The protein localises to the cytoplasm. The catalysed reaction is an N-acyl-L-alpha-aminoacyl-tRNA + H2O = an N-acyl-L-amino acid + a tRNA + H(+). Its function is as follows. Hydrolyzes ribosome-free peptidyl-tRNAs (with 1 or more amino acids incorporated), which drop off the ribosome during protein synthesis, or as a result of ribosome stalling. Catalyzes the release of premature peptidyl moieties from peptidyl-tRNA molecules trapped in stalled 50S ribosomal subunits, and thus maintains levels of free tRNAs and 50S ribosomes. The polypeptide is Peptidyl-tRNA hydrolase (Cupriavidus necator (strain ATCC 17699 / DSM 428 / KCTC 22496 / NCIMB 10442 / H16 / Stanier 337) (Ralstonia eutropha)).